We begin with the raw amino-acid sequence, 201 residues long: Large ribosomal subunit protein uL4 (201 aa).

Residues 44-71 (RAQKTRAEVTGSGKKPWRQKGTGRARSG) are disordered.

The protein belongs to the universal ribosomal protein uL4 family. As to quaternary structure, part of the 50S ribosomal subunit.

One of the primary rRNA binding proteins, this protein initially binds near the 5'-end of the 23S rRNA. It is important during the early stages of 50S assembly. It makes multiple contacts with different domains of the 23S rRNA in the assembled 50S subunit and ribosome. In terms of biological role, forms part of the polypeptide exit tunnel. This Shigella flexneri serotype 5b (strain 8401) protein is Large ribosomal subunit protein uL4.